The primary structure comprises 195 residues: 3-isopropylmalate dehydratase small subunit (195 aa).

This sequence belongs to the LeuD family. LeuD type 1 subfamily. As to quaternary structure, heterodimer of LeuC and LeuD.

It catalyses the reaction (2R,3S)-3-isopropylmalate = (2S)-2-isopropylmalate. The protein operates within amino-acid biosynthesis; L-leucine biosynthesis; L-leucine from 3-methyl-2-oxobutanoate: step 2/4. Its function is as follows. Catalyzes the isomerization between 2-isopropylmalate and 3-isopropylmalate, via the formation of 2-isopropylmaleate. The protein is 3-isopropylmalate dehydratase small subunit of Frankia alni (strain DSM 45986 / CECT 9034 / ACN14a).